A 490-amino-acid chain; its full sequence is GTPase Der (490 aa).

EngA-type G domains follow at residues 3 to 166 (PVIA…PRDE) and 196 to 369 (IKIA…KSAV). Residues 9 to 16 (GRPNVGKS), 56 to 60 (DTGGI), 118 to 121 (NKID), 202 to 209 (GRPNVGKS), 249 to 253 (DTAGV), and 314 to 317 (NKWD) each bind GTP. One can recognise a KH-like domain in the interval 370–454 (TRWPTSRLTQ…PIRIEFKGGE (85 aa)). Positions 452-490 (GGENPYEGNKNTLTDRQVNKKRRMMSHHKKADKKRRDKR) are disordered. Residues 470–490 (NKKRRMMSHHKKADKKRRDKR) show a composition bias toward basic residues.

It belongs to the TRAFAC class TrmE-Era-EngA-EngB-Septin-like GTPase superfamily. EngA (Der) GTPase family. Associates with the 50S ribosomal subunit.

Its function is as follows. GTPase that plays an essential role in the late steps of ribosome biogenesis. This Pseudomonas syringae pv. syringae (strain B728a) protein is GTPase Der.